The sequence spans 209 residues: Claudin-like protein ZF-A9 (209 aa).

4 helical membrane passes run 8–28, 81–101, 114–134, and 159–179; these read LGTT…AIPL, AILV…FAGG, ALVA…GLVP, and FGAA…GGGL. The disordered stretch occupies residues 187 to 209; the sequence is GRTSSRGRYTPASQNGRERSEYV. The segment covering 188 to 201 has biased composition (polar residues); the sequence is RTSSRGRYTPASQN.

The protein belongs to the claudin family.

The protein localises to the cell membrane. The protein resides in the cell junction. It localises to the tight junction. Its function is as follows. Component of tight junction (TJ) strands. The chain is Claudin-like protein ZF-A9 (cldng) from Danio rerio (Zebrafish).